Reading from the N-terminus, the 1127-residue chain is Zinc finger protein basonuclin-2 (1127 aa).

Positions 44 to 67 (SEEAEVDVRERDTQRDREPKRARD) are disordered. A compositionally biased stretch (basic and acidic residues) spans 49 to 67 (VDVRERDTQRDREPKRARD). K305 is covalently cross-linked (Glycyl lysine isopeptide (Lys-Gly) (interchain with G-Cter in SUMO2)). The interval 386–450 (STQNEYNESS…DLSKTEHPKS (65 aa)) is disordered. A compositionally biased stretch (low complexity) spans 389 to 400 (NEYNESSESEVS). A compositionally biased stretch (polar residues) spans 403–422 (PYKSDQTPNRNALTSITNVE). Glycyl lysine isopeptide (Lys-Gly) (interchain with G-Cter in SUMO2) cross-links involve residues K424, K444, and K449. The C2H2-type 1 zinc-finger motif lies at 469–492 (VFCNACGKTFYDKGTLKIHYNAVH). S589 bears the Phosphoserine mark. K669 participates in a covalent cross-link: Glycyl lysine isopeptide (Lys-Gly) (interchain with G-Cter in SUMO2). The tract at residues 675-772 (IDTADEFDDE…EESMEGDEHL (98 aa)) is disordered. The span at 676 to 689 (DTADEFDDEDDDPN) shows a compositional bias: acidic residues. Basic and acidic residues-rich tracts occupy residues 698-708 (MSHDNHCHSQD) and 747-772 (ERDY…DEHL). The C2H2-type 2 zinc finger occupies 861–884 (KICYVCKKSFKSSYSVKLHYRNVH). Glycyl lysine isopeptide (Lys-Gly) (interchain with G-Cter in SUMO2) cross-links involve residues K922 and K947. 2 disordered regions span residues 955-976 (LGLD…HLNG) and 996-1041 (LQSS…TLPG). The span at 1010–1023 (AGSDEGILLDDIDG) shows a compositional bias: acidic residues. C2H2-type zinc fingers lie at residues 1063–1086 (IMCN…KTVH) and 1091–1118 (HKCK…PNLH). The disordered stretch occupies residues 1107 to 1127 (SRNRHSQNPNLHKNIPFTSID).

Highly expressed in ovary, testis and kidney. Expressed at moderate levels in skin and small intestine, and at lower levels in lung. Trace amounts of expression detected in liver and colon. Not detected in brain, spleen or thymus.

The protein localises to the nucleus. Functionally, probable transcription factor specific for skin keratinocytes. May play a role in the differentiation of spermatozoa and oocytes. May also play an important role in early urinary-tract development. The polypeptide is Zinc finger protein basonuclin-2 (Mus musculus (Mouse)).